The primary structure comprises 478 residues: Sedoheptulokinase (478 aa).

The protein belongs to the FGGY kinase family. Strongly expressed in liver, kidney and pancreas. Expressed at lower levels in placenta and heart. Very weakly expressed in lung and brain.

The protein localises to the cytoplasm. The enzyme catalyses sedoheptulose + ATP = D-sedoheptulose 7-phosphate + ADP + H(+). In terms of biological role, acts as a modulator of macrophage activation through control of glucose metabolism. The polypeptide is Sedoheptulokinase (Homo sapiens (Human)).